Reading from the N-terminus, the 194-residue chain is CASP-like protein 2C2 (194 aa).

At 1 to 27 (MAAGQPRPPPPPSSVRTERVLRAACAA) the chain is on the cytoplasmic side. The helical transmembrane segment at 28 to 48 (MAAAGALLLGFSAETKTVIFV) threads the bilayer. At 49–58 (QKKAVPKDVQ) the chain is on the extracellular side. A helical transmembrane segment spans residues 59 to 79 (ALWVLIVAAAAAAAYHAAQLA). Topologically, residues 80–113 (RCLCMDRLAGGGGGCRRLRRAVACATFLLDKGCA) are cytoplasmic. The chain crosses the membrane as a helical span at residues 114-134 (YMVLATTVAALQACFVGLLGV). The Extracellular segment spans residues 135–152 (EALQWSKLCNIYTRFCEQ). Residues 153-173 (AAAGMVCSLVAAAGMAVLSAF) traverse the membrane as a helical segment. Topologically, residues 174–194 (SARDLFRRRRPCSPCVQVQQV) are cytoplasmic.

It belongs to the Casparian strip membrane proteins (CASP) family. In terms of assembly, homodimer and heterodimers.

The protein resides in the cell membrane. The sequence is that of CASP-like protein 2C2 from Sorghum bicolor (Sorghum).